Reading from the N-terminus, the 191-residue chain is MARLIDQFERLPGIGPRTAQRLALHLLNQPQEQIHQFADALLAARTQVGQCQTCFHLSADPECEICRNPERRNGVICVVADSRDLLALERTREFHGRYHVLGGLISPMDGIGPELLRVTELVQRISNEEISEVILALTPSVEGDTTSLYLGRLLKPFCSVSRIAYGLPMGSELEYADEVTLSRALEGRRPV.

Residues 51–66 form a C4-type zinc finger; the sequence is CQTCFHLSADPECEIC. A Toprim domain is found at 74–168; it reads GVICVVADSR…SVSRIAYGLP (95 aa).

Belongs to the RecR family.

In terms of biological role, may play a role in DNA repair. It seems to be involved in an RecBC-independent recombinational process of DNA repair. It may act with RecF and RecO. This Synechococcus sp. (strain CC9605) protein is Recombination protein RecR.